Here is a 141-residue protein sequence, read N- to C-terminus: Cystatin (141 aa).

A signal peptide spans 1–26 (MVHSQLPVVALLRLLCALLLLPSATM). The Cystatin domain occupies 29–129 (GGLSPRSVTD…CRFQVWSRPW (101 aa)). Positions 73-77 (QVVAG) match the Secondary area of contact motif. Cystine bridges form between Cys-91/Cys-107 and Cys-120/Cys-140.

Belongs to the cystatin family. Expressed at a low level by the venom gland (at protein level).

The protein resides in the secreted. In terms of biological role, inhibits various C1 cysteine proteases including cathepsin L, papain and cathepsin B. This protein has no toxic activity and its function in the venom is unknown. It may play a role as a housekeeping or regulatory protein. The chain is Cystatin from Notechis scutatus scutatus (Mainland tiger snake).